We begin with the raw amino-acid sequence, 643 residues long: 1-deoxy-D-xylulose-5-phosphate synthase (643 aa).

Thiamine diphosphate-binding positions include histidine 78 and 119–121 (AHS). Mg(2+) is bound at residue aspartate 150. Thiamine diphosphate is bound by residues 151-152 (GS), asparagine 179, tyrosine 288, and glutamate 370. Residue asparagine 179 participates in Mg(2+) binding.

The protein belongs to the transketolase family. DXPS subfamily. In terms of assembly, homodimer. Mg(2+) is required as a cofactor. Thiamine diphosphate serves as cofactor.

It catalyses the reaction D-glyceraldehyde 3-phosphate + pyruvate + H(+) = 1-deoxy-D-xylulose 5-phosphate + CO2. It functions in the pathway metabolic intermediate biosynthesis; 1-deoxy-D-xylulose 5-phosphate biosynthesis; 1-deoxy-D-xylulose 5-phosphate from D-glyceraldehyde 3-phosphate and pyruvate: step 1/1. In terms of biological role, catalyzes the acyloin condensation reaction between C atoms 2 and 3 of pyruvate and glyceraldehyde 3-phosphate to yield 1-deoxy-D-xylulose-5-phosphate (DXP). This Brucella abortus (strain 2308) protein is 1-deoxy-D-xylulose-5-phosphate synthase.